The primary structure comprises 5099 residues: Malformin synthetase mlfA (5099 aa).

The tract at residues 224 to 615 (QRHAADRPHS…CGRADTQVKL (392 aa)) is adenylation 1. The Carrier 1 domain maps to 756-829 (THLENEIQLA…EAASLAKVRD (74 aa)). Serine 790 is subject to O-(pantetheine 4'-phosphoryl)serine. A condensation 1 region spans residues 867–1297 (EDVFPCTSMQ…PVDSLTLLKP (431 aa)). An adenylation 2 region spans residues 1325 to 1717 (DRWVNRQPDT…GRKDTQVKLR (393 aa)). Positions 1857–1934 (ARAPELERTL…QIATQCEGIA (78 aa)) constitute a Carrier 2 domain. Position 1894 is an O-(pantetheine 4'-phosphoryl)serine (serine 1894). The disordered stretch occupies residues 1995-2040 (MQQESSSSPAPSVSSSSSSSSAPKPLLAQPEPPTNLRDSVPEPFSL). A compositionally biased stretch (low complexity) spans 1999-2017 (SSSSPAPSVSSSSSSSSAP). Residues 2067–2482 (EDIYPATPLQ…ALSPGDKKVL (416 aa)) are condensation 2. Residues 2505 to 2897 (LSTPHAPAVC…VGRKDGQLKL (393 aa)) form an adenylation 3 region. A Carrier 3 domain is found at 3032–3108 (RPATAQERGL…RLVLHLQNTS (77 aa)). Serine 3069 bears the O-(pantetheine 4'-phosphoryl)serine mark. Condensation regions lie at residues 3125-3589 (WVHL…TYDQ) and 3610-4033 (DIYP…QQAM). The segment at 4058 to 4446 (YANREAVCAW…VGRKDSQIKF (389 aa)) is adenylation 4. Residues 4581–4657 (PPSTGMQQGI…DLAEHISSRV (77 aa)) enclose the Carrier 4 domain. Serine 4618 is modified (O-(pantetheine 4'-phosphoryl)serine). The condensation 5 stretch occupies residues 4696–5017 (DILPTTGFQR…LQTVVQHQNV (322 aa)).

This sequence belongs to the NRP synthetase family.

The protein operates within secondary metabolite biosynthesis. In terms of biological role, nonribosomal peptide synthetase; part of the gene cluster that mediates the biosynthesis of malformins, cyclic pentapeptides with a disulfide bond between 2 consecutive cysteins, that show potential anti-tumor as well as antimalarial and antitrypanosomal properties. The nonribosomal peptide synthetase mlfA is responsible of the formation of the cyclic pentapeptide. The malformin biosynthesis clusters in malformin-producing fungi also contain enzymes involved in the formation of the disulfide bond between the two consecutive cysteins within malformins, in addition to additional tailoring enzymes such as methyltransferases or oxidoreductases. They are also composed of up to 4 major facilitator superfamily transporters, and transcription factors probably involved in the regulation of the expression of those clusters. This Aspergillus sclerotiicarbonarius (strain CBS 121057 / IBT 28362) protein is Malformin synthetase mlfA.